Reading from the N-terminus, the 105-residue chain is Insulin-like peptide 7 (105 aa).

The N-terminal stretch at 1–18 (MPPIILVFFLVLIPASQQ) is a signal peptide. Positions 19–57 (YPFSLESLNDQIINEEVIEYMLENSIRSSRTRRVPDEKK) are excised as a propeptide. 4 disulfide bridges follow: C61-C90, C73-C103, C77-C104, and C89-C94.

The protein belongs to the insulin family.

It is found in the secreted. Functionally, insulin-like peptide which plays a role in ageing as a consequence of daf-16 activity. This Caenorhabditis elegans protein is Insulin-like peptide 7.